Reading from the N-terminus, the 348-residue chain is Hereditary hemochromatosis protein homolog (348 aa).

The N-terminal stretch at 1-22 is a signal peptide; the sequence is MGPRARPALFFLILLRTVAAQG. The interval 23–114 is alpha-1; that stretch reads RPPRSHSLRY…IMDNHNHSKE (92 aa). Residues 23–306 are Extracellular-facing; the sequence is RPPRSHSLRY…WEPSLSNTLV (284 aa). 3 N-linked (GlcNAc...) asparagine glycosylation sites follow: N110, N130, and N234. An alpha-2 region spans residues 115-205; the sequence is SHTLQVILGC…ELGRGVLDQQ (91 aa). Disulfide bonds link C124–C187 and C225–C282. An alpha-3 region spans residues 206–297; the sequence is VPPLVKVTHH…GLDQPLTATW (92 aa). Residues 207-296 form the Ig-like C1-type domain; that stretch reads PPLVKVTHHV…PGLDQPLTAT (90 aa). Positions 298–306 are connecting peptide; the sequence is EPSLSNTLV. A helical membrane pass occupies residues 307-330; that stretch reads TGVISGIAVCVIIFLIGILFRILR. Over 331–348 the chain is Cytoplasmic; the sequence is KRQASRGAMGDYVLAECE.

Belongs to the MHC class I family. Binds TFR through the extracellular domain in a pH-dependent manner.

It is found in the cell membrane. In terms of biological role, binds to transferrin receptor (TFR) and reduces its affinity for iron-loaded transferrin. The protein is Hereditary hemochromatosis protein homolog (HFE) of Rhinoceros unicornis (Greater Indian rhinoceros).